Consider the following 159-residue polypeptide: Intron-encoded endonuclease ai4 (159 aa).

It belongs to the LAGLIDADG endonuclease family.

The protein resides in the mitochondrion. Functionally, mitochondrial DNA endonuclease involved in intron homing. The polypeptide is Intron-encoded endonuclease ai4 (ai4) (Dictyostelium discoideum (Social amoeba)).